The primary structure comprises 207 residues: 2,3-bisphosphoglycerate-dependent phosphoglycerate mutase (207 aa).

Residues 10–17 (RHGQSEWN), 23–24 (TG), Arg-62, 89–92 (ERDY), Lys-100, 116–117 (RR), and 160–161 (GN) contribute to the substrate site. His-11 functions as the Tele-phosphohistidine intermediate in the catalytic mechanism. The active-site Proton donor/acceptor is the Glu-89.

This sequence belongs to the phosphoglycerate mutase family. BPG-dependent PGAM subfamily. In terms of assembly, homodimer.

It carries out the reaction (2R)-2-phosphoglycerate = (2R)-3-phosphoglycerate. It functions in the pathway carbohydrate degradation; glycolysis; pyruvate from D-glyceraldehyde 3-phosphate: step 3/5. In terms of biological role, catalyzes the interconversion of 2-phosphoglycerate and 3-phosphoglycerate. The polypeptide is 2,3-bisphosphoglycerate-dependent phosphoglycerate mutase (Nitrobacter winogradskyi (strain ATCC 25391 / DSM 10237 / CIP 104748 / NCIMB 11846 / Nb-255)).